We begin with the raw amino-acid sequence, 609 residues long: UvrABC system protein C (609 aa).

The GIY-YIG domain occupies 16–94 (SSAGVYRMYD…IKQYMPKYNV (79 aa)). Positions 203 to 238 (KQVISELVAKMEEAAEQQAYEQAARFRDQIMALRRV) constitute a UVR domain.

It belongs to the UvrC family. In terms of assembly, interacts with UvrB in an incision complex.

It is found in the cytoplasm. Functionally, the UvrABC repair system catalyzes the recognition and processing of DNA lesions. UvrC both incises the 5' and 3' sides of the lesion. The N-terminal half is responsible for the 3' incision and the C-terminal half is responsible for the 5' incision. The protein is UvrABC system protein C of Shewanella oneidensis (strain ATCC 700550 / JCM 31522 / CIP 106686 / LMG 19005 / NCIMB 14063 / MR-1).